We begin with the raw amino-acid sequence, 343 residues long: MWPNGSSLGPCFRPTNITLEERRLIASPWFAASFCVVGLASNLLALSVLAGARQGGSHTRSSFLTFLCGLVLTDFLGLLVTGTIVVSQHAALFEWHAVDPGCRLCRFMGVVMIFFGLSPLLLGAAMASERYLGITRPFSRPAVASQRRAWATVGLVWAAALALGLLPLLGVGRYTVQYPGSWCFLTLGAESGDVAFGLLFSMLGGLSVGLSFLLNTVSVATLCHVYHGQEAAQQRPRDSEVEMMAQLLGIMVVASVCWLPLLVFIAQTVLRNPPAMSPAGQLSRTTEKELLIYLRVATWNQILDPWVYILFRRAVLRRLQPRLSTRPRSLSLQPQLTQRSGLQ.

The Extracellular segment spans residues 1 to 29 (MWPNGSSLGPCFRPTNITLEERRLIASPW). N4 and N16 each carry an N-linked (GlcNAc...) asparagine glycan. Residues 30–52 (FAASFCVVGLASNLLALSVLAGA) traverse the membrane as a helical segment. Topologically, residues 53–66 (RQGGSHTRSSFLTF) are cytoplasmic. A helical membrane pass occupies residues 67–87 (LCGLVLTDFLGLLVTGTIVVS). Residues 88 to 106 (QHAALFEWHAVDPGCRLCR) are Extracellular-facing. A disulfide bridge connects residues C105 and C183. The helical transmembrane segment at 107-128 (FMGVVMIFFGLSPLLLGAAMAS) threads the bilayer. Topologically, residues 129-149 (ERYLGITRPFSRPAVASQRRA) are cytoplasmic. Residues 150-172 (WATVGLVWAAALALGLLPLLGVG) form a helical membrane-spanning segment. Topologically, residues 173 to 193 (RYTVQYPGSWCFLTLGAESGD) are extracellular. The chain crosses the membrane as a helical span at residues 194–219 (VAFGLLFSMLGGLSVGLSFLLNTVSV). The Cytoplasmic portion of the chain corresponds to 220–246 (ATLCHVYHGQEAAQQRPRDSEVEMMAQ). Residues 247–270 (LLGIMVVASVCWLPLLVFIAQTVL) traverse the membrane as a helical segment. Residues 271–289 (RNPPAMSPAGQLSRTTEKE) are Extracellular-facing. Residues 290–311 (LLIYLRVATWNQILDPWVYILF) form a helical membrane-spanning segment. Over 312-343 (RRAVLRRLQPRLSTRPRSLSLQPQLTQRSGLQ) the chain is Cytoplasmic. 2 positions are modified to phosphoserine: S329 and S331.

Belongs to the G-protein coupled receptor 1 family. In terms of assembly, interacts with RPGRIP1L. Interacts with PSMA3. Interacts with RACK1; the interaction regulates TBXA2R cell surface expression.

The protein resides in the cell membrane. Its function is as follows. Receptor for thromboxane A2 (TXA2), a potent stimulator of platelet aggregation. The activity of this receptor is mediated by a G-protein that activates a phosphatidylinositol-calcium second messenger system. In the kidney, the binding of TXA2 to glomerular TP receptors causes intense vasoconstriction. Activates phospholipase C. Functionally, activates adenylyl cyclase. Inhibits adenylyl cyclase. In Homo sapiens (Human), this protein is Thromboxane A2 receptor (TBXA2R).